The chain runs to 170 residues: MPRSRINGNFIDKTFSIVANILLRIIPTTSGEKRAFTYYRDGMLAQSEGNYAEALQNYYEATRLEIDPYDRSYILYNIGLIHTSNGEHTKALEYYFRALERNPFLPQAFNNMAVICHYRGEQAILQGDSEIAEAWFDQAAEYWKQAIALTPGNYIEAQNWLKITKRFEFE.

3 TPR repeats span residues 35–68 (AFTY…EIDP), 72–105 (SYIL…NPFL), and 120–153 (GEQA…TPGN).

Belongs to the Ycf3 family.

The protein localises to the plastid. It localises to the chloroplast thylakoid membrane. In terms of biological role, essential for the assembly of the photosystem I (PSI) complex. May act as a chaperone-like factor to guide the assembly of the PSI subunits. In Oryza nivara (Indian wild rice), this protein is Photosystem I assembly protein Ycf3.